The chain runs to 237 residues: Probable glutathione-independent glyoxalase HSP32 (237 aa).

Residues Cys138, His139, and Glu170 contribute to the active site.

It belongs to the peptidase C56 family. HSP31-like subfamily. As to quaternary structure, homodimer.

It localises to the cytoplasm. The protein localises to the P-body. It carries out the reaction methylglyoxal + H2O = (R)-lactate + H(+). Catalyzes the conversion of methylglyoxal (MG) to D-lactate in a single glutathione (GSH)-independent step. May play a role in detoxifying endogenously produced glyoxals. Involved in protection against reactive oxygen species (ROS). Important for viability in stationary phase. May negatively regulate TORC1 in response to nutrient limitation. This chain is Probable glutathione-independent glyoxalase HSP32, found in Saccharomyces cerevisiae (strain ATCC 204508 / S288c) (Baker's yeast).